The primary structure comprises 330 residues: Src kinase-associated phosphoprotein 2-B (330 aa).

The interval 57 to 84 (DKAEDDDQEENDGFPLPPDAVSLASDRD) is disordered. Over residues 59–68 (AEDDDQEEND) the composition is skewed to acidic residues. In terms of domain architecture, PH spans 105-208 (EYLKAGYLEK…WINAIMNSRG (104 aa)). Residues 236 to 261 (ELPEESEKPVTETETQKATPVPVNNT) are disordered. Residues 240–250 (ESEKPVTETET) show a composition bias toward basic and acidic residues. Positions 251 to 261 (QKATPVPVNNT) are enriched in polar residues. One can recognise an SH3 domain in the interval 268–329 (DYANFYRGLW…PKAYIIEMYD (62 aa)).

This sequence belongs to the SKAP family. Post-translationally, phosphorylated on tyrosines.

Its subcellular location is the cytoplasm. In terms of biological role, may be involved in B-cell and macrophage adhesion processes. May play a role in src signaling pathway. The protein is Src kinase-associated phosphoprotein 2-B (skap2-b) of Xenopus laevis (African clawed frog).